We begin with the raw amino-acid sequence, 868 residues long: Lysosomal cholesterol signaling protein (868 aa).

Residues 1-36 lie on the Lumenal side of the membrane; the sequence is MDSYFSAKNSTLAGDMNATWPASHGFNATGDPPSMS. Residues 1 to 368 form a PIN-like transporter region; sequence MDSYFSAKNS…SAWLLTFPTM (368 aa). Residues Asn-9, Asn-17, and Asn-27 are each glycosylated (N-linked (GlcNAc...) asparagine). A helical transmembrane segment spans residues 37 to 57; the sequence is ITRLFPALLECFGIVLCGYIA. Cholesterol contacts are provided by Phe-41 and Tyr-55. At 58-77 the chain is on the cytoplasmic side; that stretch reads GRANIITSTQAKGLGNFVSR. The helical transmembrane segment at 78-98 threads the bilayer; it reads FALPALLFKNMVVLNFSNVDW. Topologically, residues 99 to 102 are lumenal; that stretch reads AFLY. Residues 103 to 123 traverse the membrane as a helical segment; that stretch reads SVLIGKASVFFIVCVLTLLVA. Topologically, residues 124–131 are cytoplasmic; sequence SPESRFSK. A discontinuously helical membrane pass occupies residues 132–152; that stretch reads AGLFPIFATQSNDFALGYPIV. At 153-165 the chain is on the lumenal side; sequence EALYQSTYPEYLQ. A helical membrane pass occupies residues 166 to 186; sequence YIYLVAPISLMMLNPIGFIFC. At 187–211 the chain is on the cytoplasmic side; the sequence is EIQKSKDTQNASQNKAKIVGLGFLR. Residues 212–232 form a discontinuously helical membrane-spanning segment; the sequence is VLQNPIVFMVFVGIAFNFILD. The Lumenal portion of the chain corresponds to 233–241; that stretch reads KKIPVYMEN. The discontinuously helical transmembrane segment at 242–262 threads the bilayer; sequence FLDGLANSFSGSALFYLGLTM. The Cytoplasmic portion of the chain corresponds to 263–271; sequence VGKIRRLKK. Cholesterol contacts are provided by Gly-264, Lys-265, and Ile-266. A helical transmembrane segment spans residues 272 to 292; that stretch reads SAFVVLTLLITAKLLVLPLLC. Residues 293-313 are Lumenal-facing; sequence REMVELLDKGDSVVNHTSLSN. An N-linked (GlcNAc...) asparagine glycan is attached at Asn-307. Residues 314–334 form a discontinuously helical membrane-spanning segment; the sequence is YAFLYGVFPVAPGVAIFATQF. Over 335 to 344 the chain is Cytoplasmic; it reads NMEVEIITSG. A helical membrane pass occupies residues 345-365; it reads MVISTFVSAPIMYVSAWLLTF. At 366 to 379 the chain is on the lumenal side; that stretch reads PTMDAKPLAYAIQN. The segment at 378–715 is GPCR; that stretch reads QNVSFDISII…FGIFGLDKHL (338 aa). An N-linked (GlcNAc...) asparagine glycan is attached at Asn-379. The chain crosses the membrane as a helical span at residues 380–400; it reads VSFDISIISLVSLIWSLSILL. The Cytoplasmic portion of the chain corresponds to 401 to 412; that stretch reads LSKKYKQLPHML. The helical transmembrane segment at 413–433 threads the bilayer; the sequence is TANLLIAQTIVCAGMMIWNFV. Residues 434-436 are Lumenal-facing; sequence KEK. Residues 437-457 traverse the membrane as a helical segment; it reads NFVGQILVFVLLYSSLYSTYL. Residues 458–478 are Cytoplasmic-facing; that stretch reads WTGLLAVSLFLLKKRESVQLP. Residues 479-499 form a helical membrane-spanning segment; the sequence is VGIIIISGWGIPALLVGVLLI. The Lumenal segment spans residues 500–518; it reads TGKHNGDSIDSAFFYGKEQ. A helical transmembrane segment spans residues 519-539; that stretch reads MITTAVTLFCSILIAGVSLMC. The Cytoplasmic portion of the chain corresponds to 540 to 658; it reads MNRTTQAGHY…GDPQLTRHVL (119 aa). The tract at residues 550 to 582 is disordered; the sequence is EGFGQSQNHKPVEPGSTAFEENPAPTNEPELFP. Arg-655 is a binding site for cholesterol. A helical membrane pass occupies residues 659–679; that stretch reads LCLLLIIGLFANLSSCLWWLF. Residues 680 to 689 lie on the Lumenal side of the membrane; sequence NHETGRLYVE. Residues 690 to 710 traverse the membrane as a helical segment; it reads LQFFCAVFNFGQGFISFGIFG. Over 711–868 the chain is Cytoplasmic; that stretch reads LDKHLIILPF…SSPPSVSPKT (158 aa). The DEP domain maps to 755–833; that stretch reads YHRDLCIRNI…DEYLFYRFLQ (79 aa). The segment at 836-868 is disordered; that stretch reads PEQSPPARTLRDHQEESYKEIGHSSPPSVSPKT. The span at 844–857 shows a compositional bias: basic and acidic residues; that stretch reads TLRDHQEESYKEIG.

Homodimer; via the transporter region and DEP domain. Interacts with the GATOR1 complex; preventing interaction between GATOR1 and KICSTOR; interaction is disrupted upon cholesterol starvation. Widely expressed in adult tissues and during development. In brain, widely distributed in forebrain regions, while it shows a more restricted distribution in the midbrain and hindbrain regions. Expressed at highest level in the lateral part of striatum and hippocampus.

Its subcellular location is the lysosome membrane. Its function is as follows. Cholesterol-binding protein that acts as a regulator of mTORC1 signaling pathway. Acts as a sensor of cholesterol to signal cholesterol sufficiency to mTORC1: in presence of cholesterol, binds cholesterol, leading to disruption of the interaction between the GATOR1 and KICSTOR complexes and promotion of mTORC1 signaling. Upon cholesterol starvation, GPR155/LYCHOS is unable to perturb the association between GATOR1 and KICSTOR, leading to mTORC1 signaling inhibition. Binds indole-3-acetic acid and may play a role in tryptophan metabolism. This chain is Lysosomal cholesterol signaling protein, found in Mus musculus (Mouse).